Reading from the N-terminus, the 573-residue chain is MKQSQMLIPTQKEAPADAEVLSHKMMVRAGYIYQVSAGVWAYLPLAYRVIRKIEQIIREEMDKAGAVEMLLPGLLPADLWKESGRYEAYGDNLFKLKDRRERDFILGPTHEETVTSILRDAIHSYKKLPLVVYQLQDKYRDEDRPRYGILRGKEFEMLDGYSFSADQAGLDQAYDLQAKAYRNIFDRIGLDYKVILADSGTMGGKNSQEFSAPAAIGEDVIAYTDGDYAANLEKATTKFTPTKQIGEEAELTKKATPGAHTVDEAAESLGLEASQILKSMVFLAKFEGEELKPVMVLMRGNDEVNETKVASYLGCEELLMASEEDTEKYLGAHPGSLGPIGVKEDVTILADQHLQGMINMALGANDDGYHYINANFNRDFKVDQFGDFRTVQEGETAPDGLPIKFTNGIEIGHIFKLGTHYSEVFGATVLDQNGRDVPMIMGCYGIGVSRLLSAISEQNADENGLVWPQAVAPFDIHVIPVNAKKEDQMAMAEGITANLEEAGYEVLVDDRKERAGVKFADADLIGVPIRVTVGKKAGEGIVEIKIRKTGETLEVHKEELATNIAILLKQTAE.

This sequence belongs to the class-II aminoacyl-tRNA synthetase family. ProS type 1 subfamily. As to quaternary structure, homodimer.

The protein resides in the cytoplasm. It catalyses the reaction tRNA(Pro) + L-proline + ATP = L-prolyl-tRNA(Pro) + AMP + diphosphate. In terms of biological role, catalyzes the attachment of proline to tRNA(Pro) in a two-step reaction: proline is first activated by ATP to form Pro-AMP and then transferred to the acceptor end of tRNA(Pro). As ProRS can inadvertently accommodate and process non-cognate amino acids such as alanine and cysteine, to avoid such errors it has two additional distinct editing activities against alanine. One activity is designated as 'pretransfer' editing and involves the tRNA(Pro)-independent hydrolysis of activated Ala-AMP. The other activity is designated 'posttransfer' editing and involves deacylation of mischarged Ala-tRNA(Pro). The misacylated Cys-tRNA(Pro) is not edited by ProRS. This chain is Proline--tRNA ligase, found in Limosilactobacillus fermentum (strain NBRC 3956 / LMG 18251) (Lactobacillus fermentum).